We begin with the raw amino-acid sequence, 1918 residues long: NFX1-type zinc finger-containing protein 1 (1918 aa).

Over residues 1–12 the composition is skewed to basic and acidic residues; the sequence is MEERRPHLDARP. Disordered regions lie at residues 1–58 and 75–140; these read MEER…RANN and RNPH…QPQQ. Residues 30 to 42 are compositionally biased toward low complexity; that stretch reads RARNQANNPPANA. Residues 82–105 show a composition bias toward basic and acidic residues; it reads RNQEGHASDEARDQRHDQENDTRW. Residues 120–129 are compositionally biased toward polar residues; it reads SNDNFQQWRT. A coiled-coil region spans residues 286–313; sequence DIEEETEKNLEKVQTIIEHLQEKRREGT. Disordered stretches follow at residues 796–819 and 876–896; these read SVSP…GEEE and TAAG…QKKK. Over residues 809 to 819 the composition is skewed to acidic residues; sequence EGDEEEEGEEE. The span at 877 to 887 shows a compositional bias: polar residues; the sequence is AAGQEQATGEW. Positions 886–967 form a coiled coil; that stretch reads EWQTQRNQKK…TSAERMAELR (82 aa). 6 NF-X1-type zinc fingers span residues 1298–1320, 1330–1346, 1382–1400, 1441–1463, 1471–1488, and 1546–1564; these read CGHV…QCMK, GHRC…PCQV, CGHR…LCSE, CGHP…RCQQ, CSHK…PCQR, and CGHP…KCRI. The stretch at 1741–1820 forms a coiled coil; that stretch reads LAKKRLSFTS…EKMEALKATL (80 aa). The RZ-type zinc finger occupies 1827–1898; sequence ISEEERVQIV…LASEMDGAQH (72 aa). Positions 1849, 1853, 1869, and 1872 each coordinate Zn(2+).

Belongs to the ZNFX1 family. Interacts with MAVS. As to expression, widely expressed.

It is found in the mitochondrion outer membrane. The protein resides in the cytoplasm. The protein localises to the stress granule. Functionally, RNA-binding protein that initiates the antiviral response and is required to restrict the replication of RNA viruses. Acts as a double-stranded RNA (dsRNA) sensor that recognizes viral RNA and then interacts with MAVS to initiate the type I interferon response. Also required for immunity against some bacteria, such as mycobacteria. The polypeptide is NFX1-type zinc finger-containing protein 1 (Homo sapiens (Human)).